A 112-amino-acid chain; its full sequence is Macrodomain Ori protein (112 aa).

The disordered stretch occupies residues 91–112 (FHTLSGGKPQVEGAEDYTDSDD). The segment covering 103-112 (GAEDYTDSDD) has biased composition (acidic residues).

Belongs to the MaoP family.

In terms of biological role, involved in the organization of the Ori region of the chromosome into a macrodomain (MD). It constrains DNA mobility in the Ori macrodomain and limits long-distance DNA interactions with other chromosomal regions. The chain is Macrodomain Ori protein from Escherichia coli O157:H7.